The primary structure comprises 572 residues: AAA ATPase forming ring-shaped complexes (572 aa).

Residues 1–18 show a composition bias toward low complexity; it reads MTTASQQTSSHSTASSTS. A disordered region spans residues 1 to 30; the sequence is MTTASQQTSSHSTASSTSRKGNNNDATPSL. The stretch at 42-70 forms a coiled coil; that stretch reads TRNAKLVEMLKASRDKLDALNEQIRALSD. ATP is bound at residue 258 to 263; the sequence is GCGKTL. Residues 543–572 form a disordered region; it reads VAHHNRKTTTETEATEPEGTDSGKGHTDAS. Residues 563–572 are compositionally biased toward basic and acidic residues; the sequence is DSGKGHTDAS.

The protein belongs to the AAA ATPase family. In terms of assembly, homohexamer. Assembles into a hexameric ring structure.

The chain is AAA ATPase forming ring-shaped complexes from Corynebacterium kroppenstedtii (strain DSM 44385 / JCM 11950 / CIP 105744 / CCUG 35717).